The following is a 144-amino-acid chain: Nucleoside diphosphate kinase (144 aa).

Residues K11, F59, R87, T93, R104, and N114 each contribute to the ATP site. H117 acts as the Pros-phosphohistidine intermediate in catalysis.

It belongs to the NDK family. As to quaternary structure, homotetramer. Mg(2+) is required as a cofactor.

The protein resides in the cytoplasm. It carries out the reaction a 2'-deoxyribonucleoside 5'-diphosphate + ATP = a 2'-deoxyribonucleoside 5'-triphosphate + ADP. It catalyses the reaction a ribonucleoside 5'-diphosphate + ATP = a ribonucleoside 5'-triphosphate + ADP. Major role in the synthesis of nucleoside triphosphates other than ATP. The ATP gamma phosphate is transferred to the NDP beta phosphate via a ping-pong mechanism, using a phosphorylated active-site intermediate. The polypeptide is Nucleoside diphosphate kinase (Vibrio atlanticus (strain LGP32) (Vibrio splendidus (strain Mel32))).